We begin with the raw amino-acid sequence, 225 residues long: NAD(P)H-quinone oxidoreductase subunit K, chloroplastic (225 aa).

Cys-43, Cys-44, Cys-108, and Cys-139 together coordinate [4Fe-4S] cluster.

Belongs to the complex I 20 kDa subunit family. In terms of assembly, NDH is composed of at least 16 different subunits, 5 of which are encoded in the nucleus. [4Fe-4S] cluster serves as cofactor.

The protein localises to the plastid. It is found in the chloroplast thylakoid membrane. The enzyme catalyses a plastoquinone + NADH + (n+1) H(+)(in) = a plastoquinol + NAD(+) + n H(+)(out). It catalyses the reaction a plastoquinone + NADPH + (n+1) H(+)(in) = a plastoquinol + NADP(+) + n H(+)(out). Its function is as follows. NDH shuttles electrons from NAD(P)H:plastoquinone, via FMN and iron-sulfur (Fe-S) centers, to quinones in the photosynthetic chain and possibly in a chloroplast respiratory chain. The immediate electron acceptor for the enzyme in this species is believed to be plastoquinone. Couples the redox reaction to proton translocation, and thus conserves the redox energy in a proton gradient. This is NAD(P)H-quinone oxidoreductase subunit K, chloroplastic from Fagopyrum esculentum subsp. ancestrale (Wild buckwheat).